The sequence spans 1083 residues: Phospholipase D beta 1 (1083 aa).

3 stretches are compositionally biased toward pro residues: residues 26–38 (RPPSSEPYPPPPT), 46–66 (YPYPPPPYATPPPYASPPPPH), and 132–148 (QYPPPETKPQEPLPPPQ). Residues 26–231 (RPPSSEPYPP…PNSSFPSNSH (206 aa)) form a disordered region. Polar residues-rich tracts occupy residues 191–213 (ISTNQPGPSVPQLSSLPSNSWQS) and 222–231 (PNSSFPSNSH). Positions 252–393 (HSADMQMTLF…YSGAKIEGTY (142 aa)) constitute a C2 domain. Position 455 (D455) interacts with Ca(2+). A PLD phosphodiesterase 1 domain is found at 595–630 (TIYTHHQKNVIVDADAGGNRRKIIAFVGGLDLCDGR). Residues H600, K602, and D607 contribute to the active site. Position 600 (H600) interacts with a 1,2-diacyl-sn-glycero-3-phosphate. Positions 636 and 668 each coordinate Ca(2+). Residues Q796 and H934 each coordinate a 1,2-diacyl-sn-glycero-3-phosphate. Residues 929–956 (FMVYVHSKGMVVDDEYVVIGSANINQRS) form the PLD phosphodiesterase 2 domain. Catalysis depends on residues H934, K936, and D941. Ca(2+) is bound at residue E997.

The protein belongs to the phospholipase D family. C2-PLD subfamily. Ca(2+) is required as a cofactor. Expressed in stems, and to a lower amount in leaves, flowers and siliques.

The protein localises to the cytoplasm. It is found in the membrane. The catalysed reaction is a 1,2-diacyl-sn-glycero-3-phosphocholine + H2O = a 1,2-diacyl-sn-glycero-3-phosphate + choline + H(+). Its activity is regulated as follows. Inhibited by neomycin. Up-regulated by PIP2 binding. Functionally, hydrolyzes glycerol-phospholipids at the terminal phosphodiesteric bond to generate phosphatidic acids (PA). Plays an important role in various cellular processes, including phytohormone action, vesicular trafficking, secretion, cytoskeletal arrangement, meiosis, tumor promotion, pathogenesis, membrane deterioration and senescence. Involved in regulating stomatal movement and plant-water status. Can use phosphatidylserine (PS) and phosphatidylethanolamine (PE) as substrates only in the presence of PIP2. Can use phosphatidylcholine (PC), phosphatidylglycerol (PG) or N-acylphosphatidylethanolamine (NAPE) as substrates in the presence of PE and PIP2. Modulates defense responses to bacterial and fungal pathogens. In Arabidopsis thaliana (Mouse-ear cress), this protein is Phospholipase D beta 1.